The chain runs to 261 residues: Receptor expression-enhancing protein 4 (261 aa).

The next 2 membrane-spanning stretches (helical) occupy residues 1–21 and 35–55; these read MVSW…YPAY and YVRW…ETFT. The segment at 167–261 is disordered; sequence YTDALYPDEP…KKPAQSEPEN (95 aa). Polar residues predominate over residues 221–230; it reads KSLQRSQSLR.

Belongs to the DP1 family. In terms of assembly, interacts with microtubules. During gastrulation, expressed on the dorsal side of the embryo and then in the neural plate and neural tube. At tailbud stages, expressed in the somites, neural tube and otic vesicle.

It is found in the endoplasmic reticulum membrane. In terms of biological role, microtubule-binding protein required to ensure proper cell division and nuclear envelope reassembly by sequestering the endoplasmic reticulum away from chromosomes during mitosis. Probably acts by clearing the endoplasmic reticulum membrane from metaphase chromosomes. May play a role in the maintenance of both the nervous system and the musculature. This is Receptor expression-enhancing protein 4 (reep4) from Xenopus laevis (African clawed frog).